Here is a 324-residue protein sequence, read N- to C-terminus: Beta-ketoacyl-[acyl-carrier-protein] synthase III (324 aa).

Residues cysteine 112 and histidine 251 contribute to the active site. The interval 252-256 is ACP-binding; sequence QANLR. Asparagine 281 is a catalytic residue.

The protein belongs to the thiolase-like superfamily. FabH family. As to quaternary structure, homodimer.

Its subcellular location is the cytoplasm. It carries out the reaction malonyl-[ACP] + acetyl-CoA + H(+) = 3-oxobutanoyl-[ACP] + CO2 + CoA. It functions in the pathway lipid metabolism; fatty acid biosynthesis. Functionally, catalyzes the condensation reaction of fatty acid synthesis by the addition to an acyl acceptor of two carbons from malonyl-ACP. Catalyzes the first condensation reaction which initiates fatty acid synthesis and may therefore play a role in governing the total rate of fatty acid production. Possesses both acetoacetyl-ACP synthase and acetyl transacylase activities. Its substrate specificity determines the biosynthesis of branched-chain and/or straight-chain of fatty acids. This chain is Beta-ketoacyl-[acyl-carrier-protein] synthase III, found in Clostridium perfringens (strain SM101 / Type A).